Here is a 331-residue protein sequence, read N- to C-terminus: ADP-L-glycero-D-manno-heptose-6-epimerase (331 aa).

NADP(+) is bound by residues 11-12 (FI), 32-33 (DN), lysine 39, lysine 54, 75-79 (EGACS), and asparagine 92. Catalysis depends on tyrosine 139, which acts as the Proton acceptor. Position 143 (lysine 143) interacts with NADP(+). Residue asparagine 168 coordinates substrate. Positions 169 and 177 each coordinate NADP(+). Lysine 177 serves as the catalytic Proton acceptor. Residues arginine 179, histidine 186, 200-203 (FGEY), arginine 213, and tyrosine 292 each bind substrate.

It belongs to the NAD(P)-dependent epimerase/dehydratase family. HldD subfamily. As to quaternary structure, homopentamer. NADP(+) is required as a cofactor.

The enzyme catalyses ADP-D-glycero-beta-D-manno-heptose = ADP-L-glycero-beta-D-manno-heptose. The protein operates within nucleotide-sugar biosynthesis; ADP-L-glycero-beta-D-manno-heptose biosynthesis; ADP-L-glycero-beta-D-manno-heptose from D-glycero-beta-D-manno-heptose 7-phosphate: step 4/4. In terms of biological role, catalyzes the interconversion between ADP-D-glycero-beta-D-manno-heptose and ADP-L-glycero-beta-D-manno-heptose via an epimerization at carbon 6 of the heptose. The protein is ADP-L-glycero-D-manno-heptose-6-epimerase of Ralstonia nicotianae (strain ATCC BAA-1114 / GMI1000) (Ralstonia solanacearum).